A 1524-amino-acid chain; its full sequence is DNA polymerase alpha catalytic subunit (1524 aa).

Disordered stretches follow at residues M1–I53 and R68–P139. Residues S20–K30 are compositionally biased toward basic and acidic residues. Acidic residues predominate over residues E79–D96. Residues C1333, C1336, C1375, C1378, C1414, C1419, C1440, and C1446 each contribute to the Zn(2+) site. A CysA-type zinc finger spans residues C1333–C1378. Positions C1414 to C1446 match the CysB motif motif.

It belongs to the DNA polymerase type-B family.

The protein resides in the nucleus. It catalyses the reaction DNA(n) + a 2'-deoxyribonucleoside 5'-triphosphate = DNA(n+1) + diphosphate. Its function is as follows. Polymerase alpha in a complex with DNA primase is a replicative polymerase. This Arabidopsis thaliana (Mouse-ear cress) protein is DNA polymerase alpha catalytic subunit (POLA).